Reading from the N-terminus, the 356-residue chain is Stomatin-like protein 2, mitochondrial (356 aa).

Residues 1–28 constitute a mitochondrion transit peptide; it reads MLARAARGTGALLLRGSLLASGRAPRRA. Residue S17 is modified to Phosphoserine; by PKC/PRKCZ. A Phosphotyrosine modification is found at Y124. K145 is subject to N6-acetyllysine; alternate. K145 is subject to N6-succinyllysine; alternate. Residues 215–252 are a coiled coil; that stretch reads INVAEGKKQAQILASEAEKAEQINQAAGEASAVLAKAK. K233 bears the N6-acetyllysine mark. Residues 321-356 are disordered; it reads KAPVPGTPDSLSSGSSRDVQGTDASLDEELDRVKMS. Residue T327 is modified to Phosphothreonine. Over residues 329-343 the composition is skewed to polar residues; that stretch reads DSLSSGSSRDVQGTD. S330 bears the Phosphoserine mark.

Belongs to the band 7/mec-2 family. As to quaternary structure, forms homooligomers. Interacts with MFN2; may form heterooligomers. Interacts with CACNA2D2. Interacts with PHB1 and PHB2; recruits them to cardiolipin-enriched mitochondrial membranes and stabilizes them. Hyperphosphorylated at Ser-17 in some patients with monoclonal gammopathy of undetermined significance (MGUS), multiple myeloma (MM) and Waldenstrom macroglobulinemia due to impaired dephosphorylation by PP2A. Ubiquitously expressed at low levels. Expressed in lymphoid tissues (at protein level).

It localises to the cell membrane. It is found in the mitochondrion. The protein resides in the mitochondrion inner membrane. The protein localises to the mitochondrion intermembrane space. Its subcellular location is the membrane raft. It localises to the cytoplasm. It is found in the cytoskeleton. In terms of biological role, mitochondrial protein that probably regulates the biogenesis and the activity of mitochondria. Stimulates cardiolipin biosynthesis, binds cardiolipin-enriched membranes where it recruits and stabilizes some proteins including prohibitin and may therefore act in the organization of functional microdomains in mitochondrial membranes. Through regulation of the mitochondrial function may play a role into several biological processes including cell migration, cell proliferation, T-cell activation, calcium homeostasis and cellular response to stress. May play a role in calcium homeostasis through negative regulation of calcium efflux from mitochondria. Required for mitochondrial hyperfusion a pro-survival cellular response to stress which results in increased ATP production by mitochondria. May also regulate the organization of functional domains at the plasma membrane and play a role in T-cell activation through association with the T-cell receptor signaling complex and its regulation. The chain is Stomatin-like protein 2, mitochondrial (STOML2) from Homo sapiens (Human).